The primary structure comprises 349 residues: NADH-quinone oxidoreductase subunit H (349 aa).

8 helical membrane passes run 20 to 42, 88 to 108, 123 to 143, 167 to 187, 202 to 222, 249 to 269, 284 to 304, and 325 to 345; these read WTLIKIVLIVAPMMLGVAYLTYF, GIFIIAPMLAIAPALAAWAVV, LLYIMAITSMGVYGIILSGWA, MGFSLICVLMVSNSLNLVEIV, FLSWNWLPLFPMFLVYLISGV, GMAFAVFFLAEYANMILVSAL, FLPDGILWLFAKMSAILFLFL, and VFVPICLIWLVVVGVWMMSPL.

Belongs to the complex I subunit 1 family. In terms of assembly, NDH-1 is composed of 14 different subunits. Subunits NuoA, H, J, K, L, M, N constitute the membrane sector of the complex.

It localises to the cell inner membrane. It catalyses the reaction a quinone + NADH + 5 H(+)(in) = a quinol + NAD(+) + 4 H(+)(out). NDH-1 shuttles electrons from NADH, via FMN and iron-sulfur (Fe-S) centers, to quinones in the respiratory chain. The immediate electron acceptor for the enzyme in this species is believed to be ubiquinone. Couples the redox reaction to proton translocation (for every two electrons transferred, four hydrogen ions are translocated across the cytoplasmic membrane), and thus conserves the redox energy in a proton gradient. This subunit may bind ubiquinone. The chain is NADH-quinone oxidoreductase subunit H from Dechloromonas aromatica (strain RCB).